Consider the following 1086-residue polypeptide: MSTSSSNGLLLTSMSGRHDDMEAGSAKTEEHSDHEELQHDPDDPFDIDNTKNASVESLRRWRQAALVLNASRRFRYTLDLNKEEHYDNRRRMIRAHAQVIRAALLFKLAGEQQIAFGSSTPAASTGNFDIDLEKLVSMTRNQNMSNLQQYGGVKGVAEKLKSNMEQGINEDEKEVIDRKNAFGSNTYPKKKGKNFFMFLWEAWQDLTLIILIIAAVTSLALGIKTEGLKEGWLDGGSIAFAVLLVIVVTAVSDYRQSLQFQNLNDEKRNIQLEVMRGGRTVKISIYDVVVGDVIPLRIGDQVPADGVLISGHSLAIDESSMTGESKIVHKDQKSPFLMSGCKVADGVGNMLVTGVGINTEWGLLMASISEDTGEETPLQVRLNGLATFIGIVGLSVALVVLVALLVRYFTGTTQDTNGATQFIKGTTSISDIVDDCVKIFTIAVTIVVVAVPEGLPLAVTLTLAYSMRKMMADKALVRRLSACETMGSATTICSDKTGTLTLNQMTVVETYAGGSKMDVADNPSGLHPKLVALISEGVAQNTTGNIFHPKDGGEVEISGSPTEKAILSWAYKLGMKFDTIRSESAIIHAFPFNSEKKRGGVAVLRGDSEVFIHWKGAAEIVLACCTQYMDSNGTLQSIESQKEFFRVAIDSMAKNSLRCVAIACRTQELNQVPKEQEDLDKWALPEDELILLAIVGIKDPCRPGVREAVRICTSAGVKVRMVTGDNLQTAKAIALECGILSSDTEAVEPTIIEGKVFRELSEKEREQVAKKITVMGRSSPNDKLLLVQALRKNGDVVAVTGDGTNDAPALHEADIGLSMGISGTEVAKESSDIIILDDNFASVVKVVRWGRSVYANIQKFIQFQLTVNVAALIINVVAAMSSGDVPLKAVQLLWVNLIMDTLGALALATEPPTDHLMHRTPVGRREPLITNIMWRNLLVQSFYQVAVLLVLNFAGLSILGLNHENHAHAVEVKNTMIFNAFVMCQIFNEFNARKPDEMNVFRGVNKNPLFVAIVGVTFILQIIIVTFLGKFAHTVRLGWQLWLASIIIGLVSWPLAIVGKLIPVPKTPMSVYFKKPFRKYKASRNA.

The segment covering 1-15 (MSTSSSNGLLLTSMS) has biased composition (low complexity). The disordered stretch occupies residues 1-50 (MSTSSSNGLLLTSMSGRHDDMEAGSAKTEEHSDHEELQHDPDDPFDIDNT). Residues 1 to 194 (MSTSSSNGLL…NTYPKKKGKN (194 aa)) are Cytoplasmic-facing. Positions 16–42 (GRHDDMEAGSAKTEEHSDHEELQHDPD) are enriched in basic and acidic residues. Residues 57 to 68 (SLRRWRQAALVL) form an interaction with calmodulin region. The helical transmembrane segment at 195–215 (FFMFLWEAWQDLTLIILIIAA) threads the bilayer. Residues 216–233 (VTSLALGIKTEGLKEGWL) are Lumenal-facing. The helical transmembrane segment at 234–254 (DGGSIAFAVLLVIVVTAVSDY) threads the bilayer. Over 255 to 382 (RQSLQFQNLN…GEETPLQVRL (128 aa)) the chain is Cytoplasmic. The helical transmembrane segment at 383–402 (NGLATFIGIVGLSVALVVLV) threads the bilayer. Over 403–439 (ALLVRYFTGTTQDTNGATQFIKGTTSISDIVDDCVKI) the chain is Lumenal. Residues 440 to 457 (FTIAVTIVVVAVPEGLPL) traverse the membrane as a helical segment. Residues 458–857 (AVTLTLAYSM…RWGRSVYANI (400 aa)) are Cytoplasmic-facing. Aspartate 495 acts as the 4-aspartylphosphate intermediate in catalysis. Positions 802 and 806 each coordinate Mg(2+). The helical transmembrane segment at 858–876 (QKFIQFQLTVNVAALIINV) threads the bilayer. Topologically, residues 877-887 (VAAMSSGDVPL) are lumenal. A helical transmembrane segment spans residues 888–908 (KAVQLLWVNLIMDTLGALALA). Residues 909–928 (TEPPTDHLMHRTPVGRREPL) lie on the Cytoplasmic side of the membrane. Residues 929–951 (ITNIMWRNLLVQSFYQVAVLLVL) form a helical membrane-spanning segment. At 952–963 (NFAGLSILGLNH) the chain is on the lumenal side. A helical membrane pass occupies residues 964-988 (ENHAHAVEVKNTMIFNAFVMCQIFN). Residues 989–1006 (EFNARKPDEMNVFRGVNK) are Cytoplasmic-facing. A helical transmembrane segment spans residues 1007-1028 (NPLFVAIVGVTFILQIIIVTFL). The Lumenal segment spans residues 1029–1038 (GKFAHTVRLG). The chain crosses the membrane as a helical span at residues 1039–1060 (WQLWLASIIIGLVSWPLAIVGK). Residues 1061–1086 (LIPVPKTPMSVYFKKPFRKYKASRNA) lie on the Cytoplasmic side of the membrane.

Belongs to the cation transport ATPase (P-type) (TC 3.A.3) family. Type IIB subfamily.

It is found in the membrane. It carries out the reaction Ca(2+)(in) + ATP + H2O = Ca(2+)(out) + ADP + phosphate + H(+). Activated by calmodulin. Its function is as follows. This magnesium-dependent enzyme catalyzes the hydrolysis of ATP coupled with the translocation of calcium from the cytosol out of the cell or into organelles. The chain is Calcium-transporting ATPase 9, plasma membrane-type (ACA9) from Arabidopsis thaliana (Mouse-ear cress).